We begin with the raw amino-acid sequence, 86 residues long: Kappa-theraphotoxin-Cg1a 4 (86 aa).

Positions 1 to 21 (MKASVLITLAVLGVMFVWASA) are cleaved as a signal peptide. A propeptide spanning residues 22-50 (AELEERGSDQRDSPAWLKSMERIFQSEER) is cleaved from the precursor. 3 disulfide bridges follow: Cys-52–Cys-66, Cys-59–Cys-71, and Cys-65–Cys-78. Position 84 is a phenylalanine amide (Phe-84).

This sequence belongs to the neurotoxin 10 (Hwtx-1) family. 28 (Jztx-11) subfamily. As to expression, expressed by the venom gland.

It is found in the secreted. Its function is as follows. This toxin acts as a voltage-dependent gating-modifier. It inhibits the sodium conductance (IC(50)=124 nM) and slows the fast inactivation (EC(50)=1180 nM) of Nav1.5/SCN5A. It significantly shifts the activation to more depolarized voltages and decreases the deactivation of Nav1.5 currents upon extreme depolarization, but only slightly affects voltage-dependence of steady-state inactivation. In addition, this toxin causes an approximately five-fold decrease in the rate of recovery from inactivation and an approximately 1.9-fold reduction in the closed-state inactivation rate. This toxin integrates the functions of site 3 toxins (alpha-scorpion toxins) with site 4 toxins (beta-scorpion and spider toxins) by targeting multiple sites on Nav1.5. Also shows inhibition of voltage-gated potassium channels (5 uM completely inhibits Kv2.1/KCNB1, whereas 5 uM moderately inhibits Kv4.2/KCND2 Kv4.1/KCND1 channels). The sequence is that of Kappa-theraphotoxin-Cg1a 4 from Chilobrachys guangxiensis (Chinese earth tiger tarantula).